Here is a 550-residue protein sequence, read N- to C-terminus: Tether containing UBX domain for GLUT4 (550 aa).

A2 is modified (N-acetylalanine). Residues A185–V320 are disordered. S193 bears the Phosphoserine mark. Low complexity predominate over residues S193–S206. Positions S217–D226 are enriched in basic and acidic residues. Polar residues predominate over residues D242–P252. The segment at P313–Q376 is interaction with GLUT4. Residues E382 to F458 enclose the UBX domain. At S496 the chain carries Phosphoserine. The interval S496–R550 is disordered.

As to quaternary structure, interacts with VCP. Interacts with VCPKMT. Interacts with GLUT4. In terms of tissue distribution, ubiquitous.

It is found in the endomembrane system. It localises to the endoplasmic reticulum-Golgi intermediate compartment membrane. The protein resides in the cytoplasm. The protein localises to the nucleus. Enhances VCP methylation catalyzed by VCPKMT. Tethering protein that sequesters GLUT4-containing vesicles in the cytoplasm in the absence of insulin. Modulates the amount of GLUT4 that is available at the cell surface. The polypeptide is Tether containing UBX domain for GLUT4 (Aspscr1) (Mus musculus (Mouse)).